The chain runs to 231 residues: Sugar fermentation stimulation protein homolog (231 aa).

This sequence belongs to the SfsA family.

This Geotalea daltonii (strain DSM 22248 / JCM 15807 / FRC-32) (Geobacter daltonii) protein is Sugar fermentation stimulation protein homolog.